A 228-amino-acid chain; its full sequence is Aquaporin Z 2 (228 aa).

A run of 2 helical transmembrane segments spans residues 9 to 29 (FFGT…AAAF) and 34 to 54 (IGFT…AYAV). Positions 63–65 (NPA) match the NPA 1 motif. A run of 3 helical transmembrane segments spans residues 82 to 102 (VPYV…LYVI), 129 to 149 (LVSA…VILG), and 158 to 178 (GFAP…SIPV). Residues 184–186 (NPA) carry the NPA 2 motif. Residues 204–224 (WLFWLAPIVGGAAGAVIWKLF) form a helical membrane-spanning segment.

This sequence belongs to the MIP/aquaporin (TC 1.A.8) family. Homotetramer.

Its subcellular location is the cell inner membrane. It catalyses the reaction H2O(in) = H2O(out). Functionally, channel that permits osmotically driven movement of water in both directions. It is involved in the osmoregulation and in the maintenance of cell turgor during volume expansion in rapidly growing cells. It mediates rapid entry or exit of water in response to abrupt changes in osmolarity. In Agrobacterium fabrum (strain C58 / ATCC 33970) (Agrobacterium tumefaciens (strain C58)), this protein is Aquaporin Z 2.